The chain runs to 272 residues: Phosphatidylglycerol--prolipoprotein diacylglyceryl transferase (272 aa).

Helical transmembrane passes span 21-41 (IAVHWYGIMYALALLSAIFVA), 60-80 (YIWWAEIGVILGARLGYVLFY), 101-121 (GVYAGISGMSYHGAFFGFIIA), and 131-151 (VSFWFITDIAVLGVSAAYIFG). Arg-152 serves as a coordination point for a 1,2-diacyl-sn-glycero-3-phospho-(1'-sn-glycerol). Transmembrane regions (helical) follow at residues 181-201 (PSQIYEAILEGLFVFLILAFY), 209-229 (GQLALMYGILYAIARIIAEFF), and 244-264 (LTMGILQSLIILIICVGFYVV).

The protein belongs to the Lgt family.

It is found in the cell inner membrane. The catalysed reaction is L-cysteinyl-[prolipoprotein] + a 1,2-diacyl-sn-glycero-3-phospho-(1'-sn-glycerol) = an S-1,2-diacyl-sn-glyceryl-L-cysteinyl-[prolipoprotein] + sn-glycerol 1-phosphate + H(+). Its pathway is protein modification; lipoprotein biosynthesis (diacylglyceryl transfer). Its function is as follows. Catalyzes the transfer of the diacylglyceryl group from phosphatidylglycerol to the sulfhydryl group of the N-terminal cysteine of a prolipoprotein, the first step in the formation of mature lipoproteins. This is Phosphatidylglycerol--prolipoprotein diacylglyceryl transferase from Aliarcobacter butzleri (strain RM4018) (Arcobacter butzleri).